Reading from the N-terminus, the 130-residue chain is Small ribosomal subunit protein uS8B (130 aa).

This sequence belongs to the universal ribosomal protein uS8 family.

The sequence is that of Small ribosomal subunit protein uS8B (RpS15Ab) from Drosophila melanogaster (Fruit fly).